A 349-amino-acid chain; its full sequence is N-lysine methyltransferase KMT5A (349 aa).

The tract at residues 18–46 (AAVAATAPGPEMVEQRGPGRPRSDGENVF) is disordered. The residue at position 57 (Ser-57) is a Phosphoserine. A disordered region spans residues 65–207 (RSPLQEENSV…SEERKKNELI (143 aa)). The segment covering 107-119 (VKSDEQKSKDTRR) has biased composition (basic and acidic residues). The residue at position 138 (Thr-138) is a Phosphothreonine. A compositionally biased stretch (basic residues) spans 154–170 (ALKKSLKGKQAPRKKSQ). The segment covering 192 to 207 (SKAELQSEERKKNELI) has biased composition (basic and acidic residues). Positions 213–334 (EGMKIDLIDG…AGEELLYDYG (122 aa)) constitute an SET domain. S-adenosyl-L-methionine contacts are provided by residues 223-225 (KGR), Tyr-268, and 295-296 (NH).

It belongs to the class V-like SAM-binding methyltransferase superfamily. Histone-lysine methyltransferase family. PR/SET subfamily. In terms of assembly, interacts with L3MBTL1. Interacts with SIRT2 (phosphorylated form); the interaction is direct, stimulates KMT5A-mediated methyltransferase activity at histone H4 'Lys-20' (H4K20me1) and is increased in a H(2)O(2)-induced oxidative stress-dependent manner. Post-translationally, ubiquitinated and degraded by the DCX(DTL) complex.

Its subcellular location is the nucleus. The protein localises to the chromosome. The catalysed reaction is L-lysyl(20)-[histone H4] + S-adenosyl-L-methionine = N(6)-methyl-L-lysyl(20)-[histone H4] + S-adenosyl-L-homocysteine + H(+). It catalyses the reaction L-lysyl-[protein] + S-adenosyl-L-methionine = N(6)-methyl-L-lysyl-[protein] + S-adenosyl-L-homocysteine + H(+). Its function is as follows. Protein-lysine N-methyltransferase that monomethylates both histones and non-histone proteins. Specifically monomethylates 'Lys-20' of histone H4 (H4K20me1). H4K20me1 is enriched during mitosis and represents a specific tag for epigenetic transcriptional repression. Mainly functions in euchromatin regions, thereby playing a central role in the silencing of euchromatic genes. Required for cell proliferation, probably by contributing to the maintenance of proper higher-order structure of DNA during mitosis. Involved in chromosome condensation and proper cytokinesis. Nucleosomes are preferred as substrate compared to free histones. Mediates monomethylation of p53/TP53 at 'Lys-382', leading to repress p53/TP53-target genes. Plays a negative role in TGF-beta response regulation and a positive role in cell migration. In Mus musculus (Mouse), this protein is N-lysine methyltransferase KMT5A.